The sequence spans 141 residues: HTH-type transcriptional repressor NsrR (141 aa).

An HTH rrf2-type domain is found at 2 to 129; sequence QLTSFTDYGL…DNYTLADLVE (128 aa). The H-T-H motif DNA-binding region spans 28–51; that stretch reads ISQVTEVYGVSRNHMVKIINQLSR. Residues Cys-91, Cys-96, and Cys-102 each contribute to the [2Fe-2S] cluster site.

[2Fe-2S] cluster is required as a cofactor.

Its function is as follows. Nitric oxide-sensitive repressor of genes involved in protecting the cell against nitrosative stress. May require iron for activity. In Enterobacter sp. (strain 638), this protein is HTH-type transcriptional repressor NsrR.